Here is a 605-residue protein sequence, read N- to C-terminus: Tegument protein UL47 homolog (605 aa).

The tract at residues 1-75 (MATDNARPRS…DPWKLEPAND (75 aa)) is disordered. The segment covering 8-17 (PRSRSLRRKS) has biased composition (basic residues). Basic and acidic residues predominate over residues 54–69 (GADRDPGTRRGIDPWK).

The protein belongs to the alphaherpesvirinae HHV-1 UL47 family. Interacts with US3 kinase. Interacts with UL31 and UL34; these interactions seem important for efficient virion nuclear egress. Interacts with UL41/VHS. Post-translationally, phosphorylated by US3. This phosphorylation is required for proper nuclear localization.

The protein resides in the virion tegument. The protein localises to the host nucleus. It is found in the host cytoplasm. Its function is as follows. Tegument protein that can bind to various RNA transcripts. Plays a role in the attenuation of selective viral and cellular mRNA degradation by modulating the activity of host shutoff RNase UL41/VHS. Also plays a role in the primary envelopment of virions in the perinuclear space, probably by interacting with two nuclear egress proteins UL31 and UL34. This Amazona oratrix (yellow-headed parrot) protein is Tegument protein UL47 homolog (sORF1).